The sequence spans 185 residues: Small ribosomal subunit protein uS5c (185 aa).

Residues 26–89 (FVERLIKISR…ADGRKNLIKI (64 aa)) form the S5 DRBM domain.

The protein belongs to the universal ribosomal protein uS5 family. Part of the 30S ribosomal subunit. Contacts protein S4.

It localises to the plastid. It is found in the chloroplast. Its function is as follows. With S4 and S12 plays an important role in translational accuracy. In Trieres chinensis (Marine centric diatom), this protein is Small ribosomal subunit protein uS5c (rps5).